The primary structure comprises 689 residues: DNA ligase (689 aa).

NAD(+) contacts are provided by residues 40–44 (DSEYD), 89–90 (SL), and glutamate 121. Lysine 123 serves as the catalytic N6-AMP-lysine intermediate. Residues arginine 144, glutamate 179, lysine 295, and lysine 319 each coordinate NAD(+). Cysteine 413, cysteine 416, cysteine 431, and cysteine 437 together coordinate Zn(2+). The BRCT domain maps to 610-689 (REQSSLTDKI…EEWLTLIKNV (80 aa)).

Belongs to the NAD-dependent DNA ligase family. LigA subfamily. Requires Mg(2+) as cofactor. Mn(2+) is required as a cofactor.

The catalysed reaction is NAD(+) + (deoxyribonucleotide)n-3'-hydroxyl + 5'-phospho-(deoxyribonucleotide)m = (deoxyribonucleotide)n+m + AMP + beta-nicotinamide D-nucleotide.. Its function is as follows. DNA ligase that catalyzes the formation of phosphodiester linkages between 5'-phosphoryl and 3'-hydroxyl groups in double-stranded DNA using NAD as a coenzyme and as the energy source for the reaction. It is essential for DNA replication and repair of damaged DNA. In Rickettsia rickettsii (strain Iowa), this protein is DNA ligase.